The sequence spans 432 residues: 3-phosphoshikimate 1-carboxyvinyltransferase (432 aa).

Residues K23, S24, and R28 each coordinate 3-phosphoshikimate. A phosphoenolpyruvate-binding site is contributed by K23. Positions 95 and 123 each coordinate phosphoenolpyruvate. 3-phosphoshikimate is bound by residues S167, Q169, D316, and K343. Q169 contributes to the phosphoenolpyruvate binding site. D316 acts as the Proton acceptor in catalysis. Phosphoenolpyruvate is bound by residues R347 and R391.

It belongs to the EPSP synthase family. As to quaternary structure, monomer.

The protein localises to the cytoplasm. It catalyses the reaction 3-phosphoshikimate + phosphoenolpyruvate = 5-O-(1-carboxyvinyl)-3-phosphoshikimate + phosphate. The protein operates within metabolic intermediate biosynthesis; chorismate biosynthesis; chorismate from D-erythrose 4-phosphate and phosphoenolpyruvate: step 6/7. Its function is as follows. Catalyzes the transfer of the enolpyruvyl moiety of phosphoenolpyruvate (PEP) to the 5-hydroxyl of shikimate-3-phosphate (S3P) to produce enolpyruvyl shikimate-3-phosphate and inorganic phosphate. The chain is 3-phosphoshikimate 1-carboxyvinyltransferase from Limosilactobacillus fermentum (strain NBRC 3956 / LMG 18251) (Lactobacillus fermentum).